Reading from the N-terminus, the 96-residue chain is Pyrimidine/purine nucleoside phosphorylase (96 aa).

It belongs to the nucleoside phosphorylase PpnP family.

The catalysed reaction is a purine D-ribonucleoside + phosphate = a purine nucleobase + alpha-D-ribose 1-phosphate. It carries out the reaction adenosine + phosphate = alpha-D-ribose 1-phosphate + adenine. It catalyses the reaction cytidine + phosphate = cytosine + alpha-D-ribose 1-phosphate. The enzyme catalyses guanosine + phosphate = alpha-D-ribose 1-phosphate + guanine. The catalysed reaction is inosine + phosphate = alpha-D-ribose 1-phosphate + hypoxanthine. It carries out the reaction thymidine + phosphate = 2-deoxy-alpha-D-ribose 1-phosphate + thymine. It catalyses the reaction uridine + phosphate = alpha-D-ribose 1-phosphate + uracil. The enzyme catalyses xanthosine + phosphate = alpha-D-ribose 1-phosphate + xanthine. Catalyzes the phosphorolysis of diverse nucleosides, yielding D-ribose 1-phosphate and the respective free bases. Can use uridine, adenosine, guanosine, cytidine, thymidine, inosine and xanthosine as substrates. Also catalyzes the reverse reactions. In Serratia proteamaculans (strain 568), this protein is Pyrimidine/purine nucleoside phosphorylase.